Here is a 389-residue protein sequence, read N- to C-terminus: Large ribosomal subunit protein uL3 (389 aa).

It belongs to the universal ribosomal protein uL3 family. Component of the large ribosomal subunit. Mature ribosomes consist of a small (40S) and a large (60S) subunit. The 40S subunit contains about 32 different proteins and 1 molecule of RNA (18S). The 60S subunit contains 45 different proteins and 3 molecules of RNA (25S, 5.8S and 5S).

It localises to the cytoplasm. Functionally, component of the ribosome, a large ribonucleoprotein complex responsible for the synthesis of proteins in the cell. The small ribosomal subunit (SSU) binds messenger RNAs (mRNAs) and translates the encoded message by selecting cognate aminoacyl-transfer RNA (tRNA) molecules. The large subunit (LSU) contains the ribosomal catalytic site termed the peptidyl transferase center (PTC), which catalyzes the formation of peptide bonds, thereby polymerizing the amino acids delivered by tRNAs into a polypeptide chain. The nascent polypeptides leave the ribosome through a tunnel in the LSU and interact with protein factors that function in enzymatic processing, targeting, and the membrane insertion of nascent chains at the exit of the ribosomal tunnel. RPL3 plays a role in coordinating processes of accommodating the aminoacyl-tRNA in the PTC. The protein is Large ribosomal subunit protein uL3 of Candida albicans (strain SC5314 / ATCC MYA-2876) (Yeast).